The following is a 345-amino-acid chain: D-fructose 1,6-bisphosphatase class 2/sedoheptulose 1,7-bisphosphatase (345 aa).

Mn(2+)-binding residues include D33, E57, D97, and E100. Residues 100-102 (EGT), Y131, 176-178 (RPR), and 198-200 (DGD) each bind substrate. E225 is a binding site for Mn(2+).

The protein belongs to the FBPase class 2 family. As to quaternary structure, homotetramer. Mn(2+) is required as a cofactor.

The catalysed reaction is beta-D-fructose 1,6-bisphosphate + H2O = beta-D-fructose 6-phosphate + phosphate. It catalyses the reaction D-sedoheptulose 1,7-bisphosphate + H2O = D-sedoheptulose 7-phosphate + phosphate. It functions in the pathway carbohydrate biosynthesis; Calvin cycle. Inhibited by AMP and slightly innibited by hydrogen peroxyde. Catalyzes the hydrolysis of fructose 1,6-bisphosphate (Fru 1,6-P2) and sedoheptulose 1,7-bisphosphate (Sed 1,7-P2) to fructose 6-phosphate and sedoheptulose 7-phosphate, respectively. The polypeptide is D-fructose 1,6-bisphosphatase class 2/sedoheptulose 1,7-bisphosphatase (Synechococcus elongatus (strain ATCC 33912 / PCC 7942 / FACHB-805) (Anacystis nidulans R2)).